Here is a 3677-residue protein sequence, read N- to C-terminus: Dystrophin (3677 aa).

Residues 1 to 240 (MLWWEEVEDC…YITSLFQVLP (240 aa)) form an actin-binding region. Calponin-homology (CH) domains are found at residues 15-119 (DVQK…LHWQ) and 134-240 (TNSE…QVLP). Residues 63-72 (PKEKGSTRVH) are ANK2- and ANK-3 binding. Spectrin repeat units follow at residues 342–447 (LDSY…SNLH), 451–557 (MDLQ…LLQD), 560–668 (LKWQ…QISQ), 728–828 (DITE…NWLE), 831–935 (NNII…ELQT), 944–1046 (RYQE…KLEE), 1049–1154 (NKLR…EALK), 1163–1264 (LQKD…TLEE), 1268–1464 (CWHE…LFQK), 1469–1569 (EQRL…QLEK), 1573–1676 (LSRK…NLLL), 1680–1777 (KHME…TGKA), 1779–1875 (IPLK…KALE), 1878–1980 (HQWY…TLHE), 2001–2098 (YLTE…ERQG), 2106–2209 (KWRH…RVEE), 2215–2316 (SEFQ…GELE), 2317–2415 (VHIK…LRTK), 2465–2569 (ADFN…QLNE), 2576–2678 (QWLE…ALEE), 2682–2786 (LLQQ…KKSL), 2800–2922 (KRLH…RKID), and 2927–3032 (RLQE…QLHE). The interval 1416–1914 (SDLTSHEISL…PEPRDERKIK (499 aa)) is interaction with SYNM. A WW domain is found at 3047 to 3080 (TSVQGPWERAISPNKVPYYINHETQTTCWDHPKM). Residues 3050 to 3400 (QGPWERAISP…TVLEGDNMET (351 aa)) form an interaction with SYNM region. Residues 3300–3356 (KHQAKCNICKECPIIGFRYRSLKHFNYDICQSCFFSGRVAKGHKMHYPMVEYCTPTT) form a ZZ-type; degenerate zinc finger. Zn(2+) is bound by residues cysteine 3305, cysteine 3308, cysteine 3329, and cysteine 3332. Residues 3458-3510 (DDEHLLIQHYCQSLNQDSPLSQPRSPAQILISLESEERGELERILADLEEENR) are binds to SNTB1. Phosphoserine occurs at positions 3475, 3482, and 3492. Disordered regions lie at residues 3520–3546 (KQQH…QSPR) and 3595–3677 (EAKV…EDTM). Composition is skewed to polar residues over residues 3599 to 3618 (NGTT…SSQP) and 3654 to 3664 (QLNNSFPSSRG). Phosphoserine is present on residues serine 3604, serine 3605, serine 3609, serine 3615, serine 3616, and serine 3658.

In terms of assembly, interacts with SYNM. Interacts with the syntrophins SNTG1 and SNTG2. Interacts with KRT19. Component of the dystrophin-associated glycoprotein complex which is composed of three subcomplexes: a cytoplasmic complex comprised of DMD (or UTRN), DTNA and a number of syntrophins, such as SNTB1, SNTB2, SNTG1 and SNTG2, the transmembrane dystroglycan complex, and the sarcoglycan-sarcospan complex. Interacts with DAG1 (betaDAG1) with DMD; the interaction is inhibited by phosphorylation on the PPXY motif of DAG1. Interacts with SYNM; SNTA1 and SNTB1. Interacts with CMYA5. Directly interacts with ANK2 and ANK3; these interactions do not interfere with betaDAG1-binding and are necessary for proper localization in muscle cells. Identified in a dystroglycan complex that contains at least PRX, DRP2, UTRN, DMD and DAG1. Interacts with DTNB. Interacts with PGM5; the interaction is direct. Interacts with NOS1; localizes NOS1 to sarcolemma in muscle cells. Strongly expressed in skeletal muscle and weak expression observed in newborn brain which increases in adult brain.

The protein localises to the cell membrane. It is found in the sarcolemma. It localises to the cytoplasm. The protein resides in the cytoskeleton. Its subcellular location is the postsynaptic cell membrane. Anchors the extracellular matrix to the cytoskeleton via F-actin. Ligand for dystroglycan. Component of the dystrophin-associated glycoprotein complex which accumulates at the neuromuscular junction (NMJ) and at a variety of synapses in the peripheral and central nervous systems and has a structural function in stabilizing the sarcolemma. Also implicated in signaling events and synaptic transmission. The sequence is that of Dystrophin (Dmd) from Rattus norvegicus (Rat).